Consider the following 149-residue polypeptide: MRYNDKELQALSRQPAEMAAELGMRGPKKGSVVKRRLVKLVVNFLFYFRTDEAEPIGALLLEHCRVIHEEPNSFSISFLEDPERKYHFECCSEEQCQQWMAALRQASYEFMRRSLIFYRNEIQKMTGKDPLEQYGISEEARFQLSGLKA.

In terms of domain architecture, PH spans 15 to 108 (PAEMAAELGM…WMAALRQASY (94 aa)).

This Bos taurus (Bovine) protein is Pleckstrin homology domain-containing family J member 1 (PLEKHJ1).